Reading from the N-terminus, the 410-residue chain is Diguanylate cyclase DgcM (410 aa).

PAS domains follow at residues 3–70 (THNF…NQHD) and 129–198 (GFYA…HLPG). A PAC domain is found at 199-251 (GHKPLNFVHKLADGSTRHVQTYAGPIEIYGDKLMLCIVHDITEQKRLEEQLEH). In terms of domain architecture, GGDEF spans 283 to 410 (QDYSLLLIDT…NDGRNRVLAA (128 aa)). Aspartate 291 is a binding site for Mg(2+). Residues asparagine 299, histidine 304, and aspartate 308 each coordinate substrate. Residue glutamate 334 coordinates Mg(2+). Residue glutamate 334 is the Proton acceptor of the active site.

Forms homodimers and homotetramers. Interacts with PdeR and MlrA. The cofactor is Mg(2+).

The enzyme catalyses 2 GTP = 3',3'-c-di-GMP + 2 diphosphate. It functions in the pathway purine metabolism; 3',5'-cyclic di-GMP biosynthesis. With respect to regulation, activity is inhibited by the phosphodiesterase PdeR. Inhibition is relieved by high cellular c-di-GMP levels. Part of a signaling cascade that regulates curli biosynthesis. The cascade is composed of two cyclic-di-GMP (c-di-GMP) control modules, in which c-di-GMP controlled by the DgcE/PdeH pair (module I) regulates the activity of the DgcM/PdeR pair (module II), which in turn regulates activity of the transcription factor MlrA and expression of the master biofilm regulator csgD. DgcM stimulates activity of MlrA by direct interaction, leading to the transcription of csgD. It also catalyzes the synthesis of c-di-GMP via the condensation of 2 GTP molecules, which contributes to the c-di-GMP pool generated by module I in a positive feedback loop. Production of c-di-GMP contributes to but is not essential for MlrA activation. In Escherichia coli (strain K12), this protein is Diguanylate cyclase DgcM.